The sequence spans 363 residues: NAD(P)H-quinone oxidoreductase subunit 1, chloroplastic (363 aa).

The next 6 helical transmembrane spans lie at 30 to 50 (LVPI…IVWL), 98 to 118 (FSIG…VIPF), 127 to 147 (LSIG…GLLM), 248 to 268 (YSGI…LVSS), 300 to 320 (VFGT…FLFI), and 336 to 356 (LLNL…LLTT).

Belongs to the complex I subunit 1 family. In terms of assembly, NDH is composed of at least 16 different subunits, 5 of which are encoded in the nucleus.

The protein localises to the plastid. Its subcellular location is the chloroplast thylakoid membrane. The catalysed reaction is a plastoquinone + NADH + (n+1) H(+)(in) = a plastoquinol + NAD(+) + n H(+)(out). The enzyme catalyses a plastoquinone + NADPH + (n+1) H(+)(in) = a plastoquinol + NADP(+) + n H(+)(out). NDH shuttles electrons from NAD(P)H:plastoquinone, via FMN and iron-sulfur (Fe-S) centers, to quinones in the photosynthetic chain and possibly in a chloroplast respiratory chain. The immediate electron acceptor for the enzyme in this species is believed to be plastoquinone. Couples the redox reaction to proton translocation, and thus conserves the redox energy in a proton gradient. The polypeptide is NAD(P)H-quinone oxidoreductase subunit 1, chloroplastic (Drimys granadensis).